The chain runs to 238 residues: uncharacterized protein (238 aa).

5 helical membrane-spanning segments follow: residues 6 to 26 (METL…ALMI), 45 to 65 (FILL…FFIL), 98 to 118 (IPIL…IGYI), 160 to 180 (IFGT…GYLL), and 186 to 206 (IVLC…LVGA).

This sequence belongs to the TMEM19 family.

It is found in the cell membrane. This is an uncharacterized protein from Methanocaldococcus jannaschii (strain ATCC 43067 / DSM 2661 / JAL-1 / JCM 10045 / NBRC 100440) (Methanococcus jannaschii).